A 6907-amino-acid polypeptide reads, in one-letter code: Fibrous sheath-interacting protein 2 (6907 aa).

The tract at residues 273 to 292 is disordered; the sequence is EERIEEQQHRNREESDRKKQ. The residue at position 430 (S430) is a Phosphoserine. 8 disordered regions span residues 439 to 472, 954 to 990, 1545 to 1573, 3202 to 3257, 5650 to 5672, 5725 to 5781, 5850 to 5880, and 6852 to 6874; these read SQAF…ESGP, FQKS…RPFP, VQED…TKEM, VSSD…FDQT, RTSS…EHHS, SAQS…KPGI, DKGN…EAPS, and GSAN…KQGS. Residues 445–460 are compositionally biased toward basic and acidic residues; the sequence is PSKEEKETNADWDGRP. Over residues 954 to 966 the composition is skewed to polar residues; that stretch reads FQKSRQPRISSPS. Basic and acidic residues-rich tracts occupy residues 1545 to 1555 and 3213 to 3229; these read VQEDNKEETKS and SVED…RPDS. The segment covering 5728–5741 has biased composition (low complexity); that stretch reads SVTTKKVSSSTNKN. Positions 5738–5766 form a coiled coil; the sequence is TNKNISAKEKEEEEREKEKVREEIKSEPS. Over residues 5743 to 5778 the composition is skewed to basic and acidic residues; that stretch reads SAKEKEEEEREKEKVREEIKSEPSKPDDPQNQRESK.

May interact with AKAP4. In terms of tissue distribution, predominantly expressed in testis.

Its function is as follows. Plays a role in spermatogenesis. In Homo sapiens (Human), this protein is Fibrous sheath-interacting protein 2 (FSIP2).